We begin with the raw amino-acid sequence, 540 residues long: 2,3-bisphosphoglycerate-independent phosphoglycerate mutase (540 aa).

2 residues coordinate Mn(2+): D24 and S74. S74 acts as the Phosphoserine intermediate in catalysis. Residues H135, 165–166 (RD), R197, R203, 268–271 (RPDR), and K341 each bind substrate. Positions 408, 412, 449, 450, and 467 each coordinate Mn(2+).

The protein belongs to the BPG-independent phosphoglycerate mutase family. As to quaternary structure, monomer. Mn(2+) serves as cofactor.

It catalyses the reaction (2R)-2-phosphoglycerate = (2R)-3-phosphoglycerate. It functions in the pathway carbohydrate degradation; glycolysis; pyruvate from D-glyceraldehyde 3-phosphate: step 3/5. Its function is as follows. Catalyzes the interconversion of 2-phosphoglycerate and 3-phosphoglycerate. In Prochlorococcus marinus (strain MIT 9303), this protein is 2,3-bisphosphoglycerate-independent phosphoglycerate mutase.